The sequence spans 429 residues: Adenylosuccinate synthetase (429 aa).

GTP-binding positions include 13 to 19 (GDEGKGK) and 41 to 43 (GHT). Aspartate 14 (proton acceptor) is an active-site residue. Mg(2+) contacts are provided by aspartate 14 and glycine 41. Residues 14–17 (DEGK), 39–42 (NAGH), threonine 130, arginine 144, glutamine 224, threonine 239, and arginine 303 contribute to the IMP site. The active-site Proton donor is histidine 42. Position 299-305 (299-305 (ATTGRAR)) interacts with substrate. Residues arginine 305, 331–333 (KLD), and 412–414 (STG) each bind GTP.

The protein belongs to the adenylosuccinate synthetase family. In terms of assembly, homodimer. Requires Mg(2+) as cofactor.

It localises to the cytoplasm. The enzyme catalyses IMP + L-aspartate + GTP = N(6)-(1,2-dicarboxyethyl)-AMP + GDP + phosphate + 2 H(+). The protein operates within purine metabolism; AMP biosynthesis via de novo pathway; AMP from IMP: step 1/2. Functionally, plays an important role in the de novo pathway of purine nucleotide biosynthesis. Catalyzes the first committed step in the biosynthesis of AMP from IMP. The sequence is that of Adenylosuccinate synthetase from Psychrobacter cryohalolentis (strain ATCC BAA-1226 / DSM 17306 / VKM B-2378 / K5).